The primary structure comprises 321 residues: Transaldolase (321 aa).

The Schiff-base intermediate with substrate role is filled by K132.

It belongs to the transaldolase family. Type 1 subfamily. Homodimer.

The protein resides in the cytoplasm. The catalysed reaction is D-sedoheptulose 7-phosphate + D-glyceraldehyde 3-phosphate = D-erythrose 4-phosphate + beta-D-fructose 6-phosphate. The protein operates within carbohydrate degradation; pentose phosphate pathway; D-glyceraldehyde 3-phosphate and beta-D-fructose 6-phosphate from D-ribose 5-phosphate and D-xylulose 5-phosphate (non-oxidative stage): step 2/3. In terms of biological role, transaldolase is important for the balance of metabolites in the pentose-phosphate pathway. The chain is Transaldolase from Rhizobium etli (strain ATCC 51251 / DSM 11541 / JCM 21823 / NBRC 15573 / CFN 42).